A 141-amino-acid polypeptide reads, in one-letter code: Hemoglobin subunit alpha (141 aa).

Positions 1 to 141 (VLSGEDKNNI…VSTVLTSKYR (141 aa)) constitute a Globin domain. S3 carries the phosphoserine modification. 2 positions are modified to N6-succinyllysine: K7 and K11. Residue K16 is modified to N6-acetyllysine; alternate. Position 16 is an N6-succinyllysine; alternate (K16). At Y24 the chain carries Phosphotyrosine. K40 bears the N6-succinyllysine mark. Position 49 is a phosphoserine (S49). O2 is bound at residue H58. Heme b is bound at residue H87. A Phosphoserine modification is found at S102. T108 bears the Phosphothreonine mark. 2 positions are modified to phosphoserine: S124 and S131. A phosphothreonine mark is found at T134 and T137. Residue S138 is modified to Phosphoserine.

This sequence belongs to the globin family. In terms of assembly, heterotetramer of two alpha chains and two beta chains. In terms of tissue distribution, red blood cells.

Involved in oxygen transport from the lung to the various peripheral tissues. In terms of biological role, hemopressin acts as an antagonist peptide of the cannabinoid receptor CNR1. Hemopressin-binding efficiently blocks cannabinoid receptor CNR1 and subsequent signaling. This chain is Hemoglobin subunit alpha (HBA), found in Ondatra zibethicus (Muskrat).